The primary structure comprises 81 residues: Small ribosomal subunit protein uS17 (81 aa).

The protein belongs to the universal ribosomal protein uS17 family. As to quaternary structure, part of the 30S ribosomal subunit.

One of the primary rRNA binding proteins, it binds specifically to the 5'-end of 16S ribosomal RNA. In Hyphomonas neptunium (strain ATCC 15444), this protein is Small ribosomal subunit protein uS17.